We begin with the raw amino-acid sequence, 122 residues long: Acidic phospholipase A2 (122 aa).

7 disulfide bridges follow: cysteine 26/cysteine 115, cysteine 28/cysteine 44, cysteine 43/cysteine 95, cysteine 49/cysteine 122, cysteine 50/cysteine 88, cysteine 57/cysteine 81, and cysteine 75/cysteine 86. 3 residues coordinate Ca(2+): tyrosine 27, glycine 29, and glycine 31. Residue histidine 47 is part of the active site. Residue aspartate 48 participates in Ca(2+) binding. Aspartate 89 is an active-site residue.

Ca(2+) is required as a cofactor. Expressed by the venom gland.

Its subcellular location is the secreted. It catalyses the reaction a 1,2-diacyl-sn-glycero-3-phosphocholine + H2O = a 1-acyl-sn-glycero-3-phosphocholine + a fatty acid + H(+). PLA2 catalyzes the calcium-dependent hydrolysis of the 2-acyl groups in 3-sn-phosphoglycerides. The chain is Acidic phospholipase A2 from Lachesis stenophrys (Central American bushmaster).